A 1749-amino-acid chain; its full sequence is E3 ubiquitin-protein ligase UBR1 (1749 aa).

Ala2 is subject to N-acetylalanine. Thr21 is subject to Phosphothreonine. The UBR-type zinc finger occupies 97–168 (QLCGRVFKSG…TGPFCVNHEP (72 aa)). 7 residues coordinate Zn(2+): Cys99, Cys112, Cys115, Cys124, Cys127, His133, and His136. Residue Phe148 coordinates a peptide. Cys149 contacts Zn(2+). Asp150 is an a peptide binding site. Cys151 is a binding site for Zn(2+). Asp153 lines the a peptide pocket. Zn(2+) is bound by residues Cys163 and His166. The segment at 842–868 (QHSKAEHMQKKRRKQENKDEALPPPPP) is disordered. The UBC2-binding region (U2BR) stretch occupies residues 1019 to 1054 (RKRKAEAARLHRQKIMAQMSALQKNFIETHKLMYDN). Zn(2+) is bound by residues Cys1098, Cys1101, Cys1159, His1161, His1164, and Cys1167. The RING-type; atypical zinc finger occupies 1098–1201 (CILCQEEQEV…SGEYLCPLCK (104 aa)). Ser1179 carries the post-translational modification Phosphoserine. Zn(2+)-binding residues include Cys1197, Cys1200, Cys1627, Cys1630, and Cys1653.

The protein belongs to the E3 ubiquitin-protein ligase UBR1-like family. As to quaternary structure, interacts with RECQL4. As to expression, broadly expressed, with highest levels in skeletal muscle, kidney and pancreas. Present in acinar cells of the pancreas (at protein level).

The protein localises to the cytoplasm. It is found in the cytosol. It carries out the reaction S-ubiquitinyl-[E2 ubiquitin-conjugating enzyme]-L-cysteine + [acceptor protein]-L-lysine = [E2 ubiquitin-conjugating enzyme]-L-cysteine + N(6)-ubiquitinyl-[acceptor protein]-L-lysine.. Its pathway is protein modification; protein ubiquitination. Its activity is regulated as follows. Inhibited by the small-molecule compound RF-C11, which bears two heterovalent ligands: RF-C11 inhibits activity toward both type-1 and type-2 N-degrons. Its function is as follows. E3 ubiquitin-protein ligase which is a component of the N-end rule pathway. Recognizes and binds proteins bearing specific N-terminal residues that are destabilizing according to the N-end rule, leading to their ubiquitination and subsequent degradation. Recognizes both type-1 and type-2 N-degrons, containing positively charged amino acids (Arg, Lys and His) and bulky and hydrophobic amino acids, respectively. Does not ubiquitinate proteins that are acetylated at the N-terminus. In contrast, it strongly binds methylated N-degrons. Binds leucine and is a negative regulator of the leucine-mTOR signaling pathway, thereby controlling cell growth. This chain is E3 ubiquitin-protein ligase UBR1, found in Homo sapiens (Human).